We begin with the raw amino-acid sequence, 255 residues long: Diphthine synthase (255 aa).

Residues Leu9, Asp85, Val88, 113 to 114 (SI), Leu164, Ala207, and His232 contribute to the S-adenosyl-L-methionine site.

The protein belongs to the diphthine synthase family. In terms of assembly, homodimer.

The enzyme catalyses 2-[(3S)-amino-3-carboxypropyl]-L-histidyl-[translation elongation factor 2] + 3 S-adenosyl-L-methionine = diphthine-[translation elongation factor 2] + 3 S-adenosyl-L-homocysteine + 3 H(+). The protein operates within protein modification; peptidyl-diphthamide biosynthesis. S-adenosyl-L-methionine-dependent methyltransferase that catalyzes the trimethylation of the amino group of the modified target histidine residue in translation elongation factor 2 (EF-2), to form an intermediate called diphthine. The three successive methylation reactions represent the second step of diphthamide biosynthesis. This Methanococcus maripaludis (strain C5 / ATCC BAA-1333) protein is Diphthine synthase.